The sequence spans 172 residues: MADETSADINNPALQPNGEDTSPAIGLISQYVKDLSFENPNAPAVYQWQGAPQVDVQFNIAADSVGDNLYEVLLKIDVTSKTDKGTSFVIELKYAGLFGVRNVPDDQLQPFFLAEAPRILFPFARRVVADAVQDGGFPALLLEPIDFHGLFMQQVQAAQGEQVGDGAPVGQA.

Residues 1 to 22 (MADETSADINNPALQPNGEDTS) are disordered. Over residues 7–20 (ADINNPALQPNGED) the composition is skewed to polar residues.

Belongs to the SecB family. As to quaternary structure, homotetramer, a dimer of dimers. One homotetramer interacts with 1 SecA dimer.

The protein localises to the cytoplasm. In terms of biological role, one of the proteins required for the normal export of preproteins out of the cell cytoplasm. It is a molecular chaperone that binds to a subset of precursor proteins, maintaining them in a translocation-competent state. It also specifically binds to its receptor SecA. This is Protein-export protein SecB from Sphingopyxis alaskensis (strain DSM 13593 / LMG 18877 / RB2256) (Sphingomonas alaskensis).